The following is a 273-amino-acid chain: L-fucose dehydrogenase (273 aa).

NAD(+) contacts are provided by R19, I21, D40, K41, D62, V63, N89, Y154, K158, I187, T189, and L191. Residue Y154 is the Proton acceptor of the active site.

It belongs to the short-chain dehydrogenases/reductases (SDR) family. Homotetramer.

It localises to the cytoplasm. It catalyses the reaction L-fucose + NAD(+) = L-fucono-1,5-lactone + NADH + H(+). It carries out the reaction D-arabinose + NAD(+) = D-arabinono-1,5-lactone + NADH + H(+). The catalysed reaction is L-galactose + NAD(+) = L-galactono-1,5-lactone + NADH + H(+). The protein operates within carbohydrate degradation; L-fucose degradation. Functionally, catalyzes the NAD(+)-dependent oxidation of L-fucose, yielding L-fucono-1,5-lactone, which rapidly converts spontaneously to L-fucone-1,4-lactone. Can also act on D-arabinose and L-galactose, with lower catalytic efficiency. Does not use NADPH. May be the initial enzyme of the putative L-fucose degradation pathway in mammals. The chain is L-fucose dehydrogenase from Mus musculus (Mouse).